The chain runs to 214 residues: uncharacterized protein (214 aa).

This is an uncharacterized protein from Sinorhizobium fredii (strain NBRC 101917 / NGR234).